A 41-amino-acid chain; its full sequence is Trypsin inhibitor 2c (41 aa).

Intrachain disulfides connect Cys11–Cys32 and Cys15–Cys28.

Its function is as follows. Inhibits bovine trypsin with a Ki of 0.174 nM and trypsin-like proteases from G.mellonella larvae. Has no activity against serine proteases chymotrypsin, subtilisin and elastase. Has no activity against cysteine proteases from beetle gut. The sequence is that of Trypsin inhibitor 2c from Fagopyrum esculentum (Common buckwheat).